A 198-amino-acid polypeptide reads, in one-letter code: Phycocyanobilin lyase CpcT homolog (198 aa).

This sequence belongs to the CpcT/CpeT biliprotein lyase family.

In terms of biological role, covalently attaches a chromophore to Cys residue(s) of phycobiliproteins. In vitro is not seen to act as a chromophore lyase for ApcA1, ApcA2, ApcB, ApcD, ApcF, CpcB or PecB, the lyase activity is therefore unsure. The protein is Phycocyanobilin lyase CpcT homolog (cpcT2) of Nostoc sp. (strain PCC 7120 / SAG 25.82 / UTEX 2576).